The following is a 391-amino-acid chain: tRNA-specific 2-thiouridylase MnmA (391 aa).

ATP-binding positions include 9 to 16 (GMSGGVDS) and Met35. Positions 95–97 (NPD) are interaction with target base in tRNA. Cys100 acts as the Nucleophile in catalysis. A disulfide bridge connects residues Cys100 and Cys196. Gly124 is a binding site for ATP. Positions 146–148 (KDQ) are interaction with tRNA. The active-site Cysteine persulfide intermediate is Cys196. An interaction with tRNA region spans residues 308 to 309 (RY). The segment covering 372–382 (TGQPGQATSTG) has biased composition (polar residues). The interval 372–391 (TGQPGQATSTGHAPALAEAR) is disordered.

It belongs to the MnmA/TRMU family.

The protein resides in the cytoplasm. The catalysed reaction is S-sulfanyl-L-cysteinyl-[protein] + uridine(34) in tRNA + AH2 + ATP = 2-thiouridine(34) in tRNA + L-cysteinyl-[protein] + A + AMP + diphosphate + H(+). Catalyzes the 2-thiolation of uridine at the wobble position (U34) of tRNA, leading to the formation of s(2)U34. This is tRNA-specific 2-thiouridylase MnmA from Burkholderia cenocepacia (strain ATCC BAA-245 / DSM 16553 / LMG 16656 / NCTC 13227 / J2315 / CF5610) (Burkholderia cepacia (strain J2315)).